A 238-amino-acid polypeptide reads, in one-letter code: Large ribosomal subunit protein uL1 (238 aa).

Belongs to the universal ribosomal protein uL1 family. Part of the 50S ribosomal subunit.

Its function is as follows. Binds directly to 23S rRNA. The L1 stalk is quite mobile in the ribosome, and is involved in E site tRNA release. In terms of biological role, protein L1 is also a translational repressor protein, it controls the translation of the L11 operon by binding to its mRNA. The chain is Large ribosomal subunit protein uL1 from Trichodesmium erythraeum (strain IMS101).